Consider the following 538-residue polypeptide: Syncytin-1 (538 aa).

An N-terminal signal peptide occupies residues 1 to 20 (MALPYHIFLFTVLLPSFTLT). At 31-443 (SSPYQEFLWR…NIGPWGLLSQ (413 aa)) the chain is on the extracellular side. A glycan (N-linked (GlcNAc...) asparagine) is linked at Asn-169. Positions 186–189 (CWMC) match the CXXC motif. 3 disulfide bridges follow: Cys-186-Cys-189, Cys-186-Cys-405, and Cys-397-Cys-404. N-linked (GlcNAc...) asparagine glycosylation is found at Asn-208, Asn-214, Asn-234, Asn-242, and Asn-281. A fusion peptide region spans residues 320-340 (ILPFVMGAGVLGALGTGIGSI). Residues 380–396 (LQNRRALDLLTAERGGT) are immunosuppression. The CX6CC signature appears at 397-405 (CLFLGEECC). Asn-409 carries an N-linked (GlcNAc...) asparagine glycan. A helical membrane pass occupies residues 444–464 (WMPWILPFLGPLAAIILLLLF). Residues 465–484 (GPCIFNLLVNFVSSRIEAIK) form an essential for the fusiogenic function region. The Cytoplasmic segment spans residues 465–538 (GPCIFNLLVN…LLRPNSAGSS (74 aa)). Residues 494-538 (KTKNYRRSLDWPASPRSDVNDIKGIPPEEISTAQPLLRPNSAGSS) form a disordered region.

It belongs to the gamma type-C retroviral envelope protein family. HERV class-I W env subfamily. The mature envelope protein (Env) consists of a trimer of SU-TM heterodimers attached probably by a labile interchain disulfide bond. Interacts with the C-type lectin CD209/DC-SIGN. Specific enzymatic cleavages in vivo yield mature proteins. Envelope glycoproteins are synthesized as an inactive precursor that is heavily N-glycosylated and processed likely by furin in the Golgi to yield the mature SU and TM proteins. The cleavage site between SU and TM requires the minimal sequence [KR]-X-[KR]-R. Post-translationally, the CXXC motif is highly conserved across a broad range of retroviral envelope proteins. It is thought to participate in the formation of a labile disulfide bond possibly with the CX6CC motif present in the transmembrane protein.

It is found in the cell membrane. The protein localises to the virion. Functionally, this endogenous retroviral envelope protein has retained its original fusogenic properties and participates in trophoblast fusion and the formation of a syncytium during placenta morphogenesis. May recognize and induce fusion through binding of SLC1A4 and SLC1A5. Its function is as follows. Endogenous envelope proteins may have kept, lost or modified their original function during evolution. Retroviral envelope proteins mediate receptor recognition and membrane fusion during early infection. The surface protein (SU) mediates receptor recognition, while the transmembrane protein (TM) acts as a class I viral fusion protein. The protein may have at least 3 conformational states: pre-fusion native state, pre-hairpin intermediate state, and post-fusion hairpin state. During viral and target cell membrane fusion, the coiled coil regions (heptad repeats) assume a trimer-of-hairpins structure, positioning the fusion peptide in close proximity to the C-terminal region of the ectodomain. The formation of this structure appears to drive apposition and subsequent fusion of membranes. This Hylobates pileatus (Pileated gibbon) protein is Syncytin-1 (ERVW-1).